The following is a 713-amino-acid chain: Serine/threonine-protein kinase SSN3 (713 aa).

Positions 66-484 (YTILGFLSSG…ANQALEHAWF (419 aa)) constitute a Protein kinase domain. Residue 72 to 80 (LSSGTYGRV) participates in ATP binding. Low complexity predominate over residues 104 to 120 (NAGTGSGTATVGSGAST). The disordered stretch occupies residues 104 to 188 (NAGTGSGTAT…GGSDNTLQLS (85 aa)). The segment covering 129–142 (QQHQLLDSPSSSLH) has biased composition (polar residues). Low complexity predominate over residues 158 to 175 (GTPSASPSLSASLGTSTA). K201 contacts ATP. Catalysis depends on D304, which acts as the Proton acceptor. Over residues 657 to 672 (SNPATVRSSHSIGSTE) the composition is skewed to polar residues. Positions 657 to 713 (SNPATVRSSHSIGSTESITPTTSSQPIPAQPSSAPLARTTNLVATATRNQQRKRQRN) are disordered. The segment covering 673–691 (SITPTTSSQPIPAQPSSAP) has biased composition (low complexity). Residues 694 to 705 (RTTNLVATATRN) show a composition bias toward polar residues.

It belongs to the protein kinase superfamily. CMGC Ser/Thr protein kinase family. CDC2/CDKX subfamily. As to quaternary structure, component of the srb8-11 complex, a regulatory module of the Mediator complex. Mg(2+) is required as a cofactor.

The protein resides in the nucleus. It catalyses the reaction L-seryl-[protein] + ATP = O-phospho-L-seryl-[protein] + ADP + H(+). The enzyme catalyses L-threonyl-[protein] + ATP = O-phospho-L-threonyl-[protein] + ADP + H(+). It carries out the reaction [DNA-directed RNA polymerase] + ATP = phospho-[DNA-directed RNA polymerase] + ADP + H(+). Functionally, component of the srb8-11 complex. The srb8-11 complex is a regulatory module of the Mediator complex which is itself dependent transcription. The srb8-11 complex may be involved in the transcriptional repression of a subset of genes regulated by Mediator. It may inhibit the association of the Mediator complex with RNA polymerase II to form the holoenzyme complex. The srb8-11 complex phosphorylates the C-terminal domain (CTD) of the largest subunit of RNA polymerase II. This is Serine/threonine-protein kinase SSN3 (SSN3) from Mycosarcoma maydis (Corn smut fungus).